Here is a 477-residue protein sequence, read N- to C-terminus: Mannitol 2-dehydrogenase (477 aa).

19–30 (IVHIGVGNFHRA) is an NAD(+) binding site.

The protein belongs to the mannitol dehydrogenase family. As to quaternary structure, monomer.

It carries out the reaction D-mannitol + NAD(+) = D-fructose + NADH + H(+). The sequence is that of Mannitol 2-dehydrogenase (mtlK) from Cereibacter sphaeroides (Rhodobacter sphaeroides).